A 488-amino-acid polypeptide reads, in one-letter code: ATP-dependent RNA helicase dbp3 (488 aa).

The segment covering 1 to 29 has biased composition (basic and acidic residues); sequence MAKREHQDQTGDSRPSKKSKGTKDTKKNT. The interval 1–42 is disordered; sequence MAKREHQDQTGDSRPSKKSKGTKDTKKNTEVSPPYFQSPALD. The Q motif motif lies at 92–100; that stretch reads GFASPTAIQ. The 176-residue stretch at 104-279 folds into the Helicase ATP-binding domain; that stretch reads WPLLFAGRDV…STFMTSPVTV (176 aa). Residue 117–124 coordinates ATP; sequence AETGSGKT. The DEAD box motif lies at 226–229; it reads DEAD. In terms of domain architecture, Helicase C-terminal spans 306–457; it reads EKEQRLVQIL…EVPEALLKFG (152 aa).

Belongs to the DEAD box helicase family. DDX5/DBP2 subfamily.

The protein localises to the nucleus. Its subcellular location is the nucleolus. It carries out the reaction ATP + H2O = ADP + phosphate + H(+). ATP-dependent RNA helicase required for 60S ribosomal subunit synthesis. Involved in efficient pre-rRNA processing, predominantly at site A3, which is necessary for the normal formation of 25S and 5.8S rRNAs. The protein is ATP-dependent RNA helicase dbp3 (dbp3) of Emericella nidulans (strain FGSC A4 / ATCC 38163 / CBS 112.46 / NRRL 194 / M139) (Aspergillus nidulans).